The chain runs to 428 residues: Chaperone SurA (428 aa).

A signal peptide spans 1-20 (MKNWKTLLLGIAMIANTSFA). 2 PpiC domains span residues 171 to 272 (STEL…KVND) and 282 to 382 (VTEV…ELLD).

The protein resides in the periplasm. The catalysed reaction is [protein]-peptidylproline (omega=180) = [protein]-peptidylproline (omega=0). In terms of biological role, chaperone involved in the correct folding and assembly of outer membrane proteins. Recognizes specific patterns of aromatic residues and the orientation of their side chains, which are found more frequently in integral outer membrane proteins. May act in both early periplasmic and late outer membrane-associated steps of protein maturation. This Shigella dysenteriae serotype 1 (strain Sd197) protein is Chaperone SurA.